The primary structure comprises 151 residues: UPF0756 membrane protein Aflv_0503 (151 aa).

Helical transmembrane passes span 4–24, 52–72, 85–105, and 115–135; these read FIFL…SLII, LGVT…KIGF, WIAM…VALL, and LVLG…GPLI.

It belongs to the UPF0756 family.

It is found in the cell membrane. The chain is UPF0756 membrane protein Aflv_0503 from Anoxybacillus flavithermus (strain DSM 21510 / WK1).